The sequence spans 205 residues: Transcriptional regulator GfcR (205 aa).

It belongs to the purine/pyrimidine phosphoribosyltransferase family. GfcR subfamily.

In Methanococcus maripaludis (strain DSM 14266 / JCM 13030 / NBRC 101832 / S2 / LL), this protein is Transcriptional regulator GfcR.